The primary structure comprises 574 residues: 2-succinyl-5-enolpyruvyl-6-hydroxy-3-cyclohexene-1-carboxylate synthase (574 aa).

The protein belongs to the TPP enzyme family. MenD subfamily. Homodimer. It depends on Mg(2+) as a cofactor. Mn(2+) serves as cofactor. Requires thiamine diphosphate as cofactor.

It carries out the reaction isochorismate + 2-oxoglutarate + H(+) = 5-enolpyruvoyl-6-hydroxy-2-succinyl-cyclohex-3-ene-1-carboxylate + CO2. The protein operates within quinol/quinone metabolism; 1,4-dihydroxy-2-naphthoate biosynthesis; 1,4-dihydroxy-2-naphthoate from chorismate: step 2/7. It participates in quinol/quinone metabolism; menaquinone biosynthesis. In terms of biological role, catalyzes the thiamine diphosphate-dependent decarboxylation of 2-oxoglutarate and the subsequent addition of the resulting succinic semialdehyde-thiamine pyrophosphate anion to isochorismate to yield 2-succinyl-5-enolpyruvyl-6-hydroxy-3-cyclohexene-1-carboxylate (SEPHCHC). The chain is 2-succinyl-5-enolpyruvyl-6-hydroxy-3-cyclohexene-1-carboxylate synthase from Rubrobacter xylanophilus (strain DSM 9941 / JCM 11954 / NBRC 16129 / PRD-1).